A 223-amino-acid chain; its full sequence is Thiamine-phosphate synthase (223 aa).

4-amino-2-methyl-5-(diphosphooxymethyl)pyrimidine contacts are provided by residues 45–49 (QYREK) and N77. The Mg(2+) site is built by D78 and D97. T116 lines the 4-amino-2-methyl-5-(diphosphooxymethyl)pyrimidine pocket. 142 to 144 (SYT) provides a ligand contact to 2-[(2R,5Z)-2-carboxy-4-methylthiazol-5(2H)-ylidene]ethyl phosphate. K145 is a 4-amino-2-methyl-5-(diphosphooxymethyl)pyrimidine binding site. 2-[(2R,5Z)-2-carboxy-4-methylthiazol-5(2H)-ylidene]ethyl phosphate-binding positions include G173 and 193 to 194 (VT).

This sequence belongs to the thiamine-phosphate synthase family. Requires Mg(2+) as cofactor.

It carries out the reaction 2-[(2R,5Z)-2-carboxy-4-methylthiazol-5(2H)-ylidene]ethyl phosphate + 4-amino-2-methyl-5-(diphosphooxymethyl)pyrimidine + 2 H(+) = thiamine phosphate + CO2 + diphosphate. It catalyses the reaction 2-(2-carboxy-4-methylthiazol-5-yl)ethyl phosphate + 4-amino-2-methyl-5-(diphosphooxymethyl)pyrimidine + 2 H(+) = thiamine phosphate + CO2 + diphosphate. The enzyme catalyses 4-methyl-5-(2-phosphooxyethyl)-thiazole + 4-amino-2-methyl-5-(diphosphooxymethyl)pyrimidine + H(+) = thiamine phosphate + diphosphate. Its pathway is cofactor biosynthesis; thiamine diphosphate biosynthesis; thiamine phosphate from 4-amino-2-methyl-5-diphosphomethylpyrimidine and 4-methyl-5-(2-phosphoethyl)-thiazole: step 1/1. Condenses 4-methyl-5-(beta-hydroxyethyl)thiazole monophosphate (THZ-P) and 2-methyl-4-amino-5-hydroxymethyl pyrimidine pyrophosphate (HMP-PP) to form thiamine monophosphate (TMP). The protein is Thiamine-phosphate synthase of Dictyoglomus thermophilum (strain ATCC 35947 / DSM 3960 / H-6-12).